We begin with the raw amino-acid sequence, 410 residues long: Cysteine desulfurase IscS (410 aa).

Pyridoxal 5'-phosphate-binding positions include 80–81, N160, Q188, and 208–210; these read AT and SGH. K211 bears the N6-(pyridoxal phosphate)lysine mark. T248 contacts pyridoxal 5'-phosphate. Catalysis depends on C334, which acts as the Cysteine persulfide intermediate. A [2Fe-2S] cluster-binding site is contributed by C334.

The protein belongs to the class-V pyridoxal-phosphate-dependent aminotransferase family. NifS/IscS subfamily. Homodimer. Forms a heterotetramer with IscU, interacts with other sulfur acceptors. Pyridoxal 5'-phosphate is required as a cofactor.

It localises to the cytoplasm. It carries out the reaction (sulfur carrier)-H + L-cysteine = (sulfur carrier)-SH + L-alanine. Its pathway is cofactor biosynthesis; iron-sulfur cluster biosynthesis. Functionally, master enzyme that delivers sulfur to a number of partners involved in Fe-S cluster assembly, tRNA modification or cofactor biosynthesis. Catalyzes the removal of elemental sulfur atoms from cysteine to produce alanine. Functions as a sulfur delivery protein for Fe-S cluster synthesis onto IscU, an Fe-S scaffold assembly protein, as well as other S acceptor proteins. This Rickettsia rickettsii (strain Iowa) protein is Cysteine desulfurase IscS.